A 129-amino-acid chain; its full sequence is Small ribosomal subunit protein uS12 (129 aa).

Asp-89 carries the 3-methylthioaspartic acid modification. The segment at 110 to 129 is disordered; the sequence is RKQGRSRYGAPRKQVVATKK.

Belongs to the universal ribosomal protein uS12 family. Part of the 30S ribosomal subunit. Contacts proteins S8 and S17. May interact with IF1 in the 30S initiation complex.

With S4 and S5 plays an important role in translational accuracy. Functionally, interacts with and stabilizes bases of the 16S rRNA that are involved in tRNA selection in the A site and with the mRNA backbone. Located at the interface of the 30S and 50S subunits, it traverses the body of the 30S subunit contacting proteins on the other side and probably holding the rRNA structure together. The combined cluster of proteins S8, S12 and S17 appears to hold together the shoulder and platform of the 30S subunit. The sequence is that of Small ribosomal subunit protein uS12 from Rickettsia bellii (strain RML369-C).